Here is a 490-residue protein sequence, read N- to C-terminus: Glutamyl-tRNA(Gln) amidotransferase subunit A (490 aa).

Residues lysine 78 and serine 153 each act as charge relay system in the active site. Serine 177 acts as the Acyl-ester intermediate in catalysis.

Belongs to the amidase family. GatA subfamily. As to quaternary structure, heterotrimer of A, B and C subunits.

The enzyme catalyses L-glutamyl-tRNA(Gln) + L-glutamine + ATP + H2O = L-glutaminyl-tRNA(Gln) + L-glutamate + ADP + phosphate + H(+). In terms of biological role, allows the formation of correctly charged Gln-tRNA(Gln) through the transamidation of misacylated Glu-tRNA(Gln) in organisms which lack glutaminyl-tRNA synthetase. The reaction takes place in the presence of glutamine and ATP through an activated gamma-phospho-Glu-tRNA(Gln). The sequence is that of Glutamyl-tRNA(Gln) amidotransferase subunit A from Desulforapulum autotrophicum (strain ATCC 43914 / DSM 3382 / VKM B-1955 / HRM2) (Desulfobacterium autotrophicum).